The primary structure comprises 770 residues: Cullin-1 (770 aa).

In terms of domain architecture, Cullin neddylation spans 700–761 (DRKLQIQAAI…EKEYLMRVEG (62 aa)). K714 participates in a covalent cross-link: Glycyl lysine isopeptide (Lys-Gly) (interchain with G-Cter in NEDD8).

This sequence belongs to the cullin family. In terms of assembly, part of a complex that includes culA, fbxA and regA. Formation of this complex is dependent on the MAP kinase erkB. Neddylated; which enhances the ubiquitination activity of SCF.

Its pathway is protein modification; protein ubiquitination. Its function is as follows. Probable core component of cullin-based SCF-like E3 ubiquitin-protein ligase complexes which mediate the ubiquitination and subsequent proteasomal degradation of target proteins. The E3 ubiquitin-protein ligase activity of the complex is dependent on the neddylation of the cullin subunit. Required at several stages during development. CulA and fbxA regulate multicellular development by targeting regA for degradation via a pathway that requires erkB function, leading to an increase in cAMP and PKA activity. This Dictyostelium discoideum (Social amoeba) protein is Cullin-1 (culA).